Consider the following 237-residue polypeptide: Ribosomal RNA small subunit methyltransferase G (237 aa).

Residues Gly78, Phe83, 129–130 (AE), and Arg148 contribute to the S-adenosyl-L-methionine site.

It belongs to the methyltransferase superfamily. RNA methyltransferase RsmG family.

The protein resides in the cytoplasm. Its function is as follows. Specifically methylates the N7 position of a guanine in 16S rRNA. The sequence is that of Ribosomal RNA small subunit methyltransferase G from Streptococcus equi subsp. equi (strain 4047).